The following is a 328-amino-acid chain: 4-hydroxy-3-methylbut-2-enyl diphosphate reductase (328 aa).

Cys13 is a binding site for [4Fe-4S] cluster. (2E)-4-hydroxy-3-methylbut-2-enyl diphosphate is bound by residues His41 and His75. Dimethylallyl diphosphate-binding residues include His41 and His75. Isopentenyl diphosphate is bound by residues His41 and His75. A [4Fe-4S] cluster-binding site is contributed by Cys97. Residue His125 participates in (2E)-4-hydroxy-3-methylbut-2-enyl diphosphate binding. His125 lines the dimethylallyl diphosphate pocket. His125 lines the isopentenyl diphosphate pocket. The active-site Proton donor is Glu127. A (2E)-4-hydroxy-3-methylbut-2-enyl diphosphate-binding site is contributed by Thr168. Cys225 contacts [4Fe-4S] cluster. Positions 253, 254, 255, and 302 each coordinate (2E)-4-hydroxy-3-methylbut-2-enyl diphosphate. Positions 253, 254, 255, and 302 each coordinate dimethylallyl diphosphate. Residues Ser253, Ser254, Asn255, and Ser302 each coordinate isopentenyl diphosphate.

It belongs to the IspH family. Requires [4Fe-4S] cluster as cofactor.

It catalyses the reaction isopentenyl diphosphate + 2 oxidized [2Fe-2S]-[ferredoxin] + H2O = (2E)-4-hydroxy-3-methylbut-2-enyl diphosphate + 2 reduced [2Fe-2S]-[ferredoxin] + 2 H(+). The catalysed reaction is dimethylallyl diphosphate + 2 oxidized [2Fe-2S]-[ferredoxin] + H2O = (2E)-4-hydroxy-3-methylbut-2-enyl diphosphate + 2 reduced [2Fe-2S]-[ferredoxin] + 2 H(+). The protein operates within isoprenoid biosynthesis; dimethylallyl diphosphate biosynthesis; dimethylallyl diphosphate from (2E)-4-hydroxy-3-methylbutenyl diphosphate: step 1/1. Its pathway is isoprenoid biosynthesis; isopentenyl diphosphate biosynthesis via DXP pathway; isopentenyl diphosphate from 1-deoxy-D-xylulose 5-phosphate: step 6/6. Functionally, catalyzes the conversion of 1-hydroxy-2-methyl-2-(E)-butenyl 4-diphosphate (HMBPP) into a mixture of isopentenyl diphosphate (IPP) and dimethylallyl diphosphate (DMAPP). Acts in the terminal step of the DOXP/MEP pathway for isoprenoid precursor biosynthesis. The polypeptide is 4-hydroxy-3-methylbut-2-enyl diphosphate reductase (Chlorobium chlorochromatii (strain CaD3)).